A 531-amino-acid polypeptide reads, in one-letter code: Anthranilate synthase component 1 (531 aa).

Residues serine 56 and 284 to 286 (PYM) each bind L-tryptophan. 324–325 (GS) provides a ligand contact to chorismate. A Mg(2+)-binding site is contributed by glutamate 351. Residues tyrosine 439, arginine 459, 473-475 (GGG), and glycine 475 each bind chorismate. Residue glutamate 488 participates in Mg(2+) binding. The tract at residues 506-531 (LHNITPDSVSAPDSVSSPDSVTEANS) is disordered. Over residues 511–531 (PDSVSAPDSVSSPDSVTEANS) the composition is skewed to low complexity.

This sequence belongs to the anthranilate synthase component I family. In terms of assembly, heterotetramer consisting of two non-identical subunits: a beta subunit (TrpG) and a large alpha subunit (TrpE). Requires Mg(2+) as cofactor.

The catalysed reaction is chorismate + L-glutamine = anthranilate + pyruvate + L-glutamate + H(+). Its pathway is amino-acid biosynthesis; L-tryptophan biosynthesis; L-tryptophan from chorismate: step 1/5. Its activity is regulated as follows. Feedback inhibited by tryptophan. Part of a heterotetrameric complex that catalyzes the two-step biosynthesis of anthranilate, an intermediate in the biosynthesis of L-tryptophan. In the first step, the glutamine-binding beta subunit (TrpG) of anthranilate synthase (AS) provides the glutamine amidotransferase activity which generates ammonia as a substrate that, along with chorismate, is used in the second step, catalyzed by the large alpha subunit of AS (TrpE) to produce anthranilate. In the absence of TrpG, TrpE can synthesize anthranilate directly from chorismate and high concentrations of ammonia. The chain is Anthranilate synthase component 1 (trpE) from Arthrobacter globiformis.